Reading from the N-terminus, the 505-residue chain is Trans-cinnamate 4-monooxygenase (505 aa).

Residues 3–23 (LLLLEKTLLALFLAAITAITI) traverse the membrane as a helical segment. (E)-cinnamate-binding positions include 213–218 (RSRLAQ) and alanine 306. Cysteine 447 contributes to the heme binding site.

Belongs to the cytochrome P450 family. It depends on heme as a cofactor.

It is found in the membrane. It carries out the reaction (E)-cinnamate + reduced [NADPH--hemoprotein reductase] + O2 = (E)-4-coumarate + oxidized [NADPH--hemoprotein reductase] + H2O + H(+). Its pathway is phenylpropanoid metabolism; trans-4-coumarate biosynthesis; trans-4-coumarate from trans-cinnamate: step 1/1. Its function is as follows. Catalyzes the first oxidative step of the phenylpropanoid pathway in higher plants by transforming trans-cinnamate into p-coumarate. The compounds formed by this pathway are essential components for lignification, pollination, and defense against ultraviolet light, predators and pathogens. The polypeptide is Trans-cinnamate 4-monooxygenase (CYP73A9) (Pisum sativum (Garden pea)).